Consider the following 357-residue polypeptide: MSDKTPRKPTAFRLEQPARVSAASEQEEPRRPRAVKDLEQITPQADVFDLTDDEAAELEILDPAFEAPERKGWSLSRILFGALGILVSFAIGIWTEDLIRALFVRADWLGWTALGVAMVALAAFAAIILRELVALRRLASVQHLRKDAADAAERDDMAAARKAVDALRTIAAGIPETAKGRQLLDSLTDDIIDGRDLIRLAETEILRPLDREARTLVLNASKRVSIVTAISPRALVDIGYVIFESARLIRRLSQLYGGRPGTLGFIKLARRVIAHLAVTGTIAMGDSVIQQLVGHGLASRLSAKLGEGVVNGLMTARMGIAAMDVVRPFPFNAEKRPGIGDFIGDLARLNSDRNARK.

A disordered region spans residues 1-36 (MSDKTPRKPTAFRLEQPARVSAASEQEEPRRPRAVK). Basic and acidic residues predominate over residues 27–36 (EEPRRPRAVK). The next 2 helical transmembrane spans lie at 78–98 (ILFG…TEDL) and 109–129 (LGWT…AIIL).

This sequence belongs to the UPF0283 family.

It is found in the cell inner membrane. This chain is UPF0283 membrane protein BOV_0999, found in Brucella ovis (strain ATCC 25840 / 63/290 / NCTC 10512).